A 179-amino-acid polypeptide reads, in one-letter code: ATP synthase subunit delta (179 aa).

This sequence belongs to the ATPase delta chain family. In terms of assembly, F-type ATPases have 2 components, F(1) - the catalytic core - and F(0) - the membrane proton channel. F(1) has five subunits: alpha(3), beta(3), gamma(1), delta(1), epsilon(1). F(0) has three main subunits: a(1), b(2) and c(10-14). The alpha and beta chains form an alternating ring which encloses part of the gamma chain. F(1) is attached to F(0) by a central stalk formed by the gamma and epsilon chains, while a peripheral stalk is formed by the delta and b chains.

The protein resides in the cell inner membrane. Its function is as follows. F(1)F(0) ATP synthase produces ATP from ADP in the presence of a proton or sodium gradient. F-type ATPases consist of two structural domains, F(1) containing the extramembraneous catalytic core and F(0) containing the membrane proton channel, linked together by a central stalk and a peripheral stalk. During catalysis, ATP synthesis in the catalytic domain of F(1) is coupled via a rotary mechanism of the central stalk subunits to proton translocation. This protein is part of the stalk that links CF(0) to CF(1). It either transmits conformational changes from CF(0) to CF(1) or is implicated in proton conduction. The protein is ATP synthase subunit delta of Thermosipho melanesiensis (strain DSM 12029 / CIP 104789 / BI429).